Reading from the N-terminus, the 328-residue chain is Aryl-hydrocarbon-interacting protein-like 1 (328 aa).

The PPIase FKBP-type domain maps to 53-145 (KQVGQPMNII…DLDELQKEPQ (93 aa)). TPR repeat units lie at residues 178–211 (VPLL…LRNL), 230–263 (NTLI…HPGI), and 264–297 (VKAY…EPSM).

Interacts with NUB1. As to expression, highly expressed in retina.

The protein resides in the cytoplasm. Its subcellular location is the nucleus. In terms of biological role, may be important in protein trafficking and/or protein folding and stabilization. In Rattus norvegicus (Rat), this protein is Aryl-hydrocarbon-interacting protein-like 1 (Aipl1).